A 227-amino-acid polypeptide reads, in one-letter code: Cytochrome c oxidase subunit 2 (227 aa).

The Mitochondrial intermembrane segment spans residues Met1–Ser14. Residues Pro15–Met45 traverse the membrane as a helical segment. Residues Leu46–Gln59 are Mitochondrial matrix-facing. The helical transmembrane segment at Glu60 to Met87 threads the bilayer. At Asp88–Val227 the chain is on the mitochondrial intermembrane side. The Cu cation site is built by His161, Cys196, Glu198, Cys200, His204, and Met207. Mg(2+) is bound at residue Glu198. Tyr218 carries the post-translational modification Phosphotyrosine.

The protein belongs to the cytochrome c oxidase subunit 2 family. Component of the cytochrome c oxidase (complex IV, CIV), a multisubunit enzyme composed of 14 subunits. The complex is composed of a catalytic core of 3 subunits MT-CO1, MT-CO2 and MT-CO3, encoded in the mitochondrial DNA, and 11 supernumerary subunits COX4I, COX5A, COX5B, COX6A, COX6B, COX6C, COX7A, COX7B, COX7C, COX8 and NDUFA4, which are encoded in the nuclear genome. The complex exists as a monomer or a dimer and forms supercomplexes (SCs) in the inner mitochondrial membrane with NADH-ubiquinone oxidoreductase (complex I, CI) and ubiquinol-cytochrome c oxidoreductase (cytochrome b-c1 complex, complex III, CIII), resulting in different assemblies (supercomplex SCI(1)III(2)IV(1) and megacomplex MCI(2)III(2)IV(2)). Found in a complex with TMEM177, COA6, COX18, COX20, SCO1 and SCO2. Interacts with TMEM177 in a COX20-dependent manner. Interacts with COX20. Interacts with COX16. Cu cation is required as a cofactor.

It localises to the mitochondrion inner membrane. It catalyses the reaction 4 Fe(II)-[cytochrome c] + O2 + 8 H(+)(in) = 4 Fe(III)-[cytochrome c] + 2 H2O + 4 H(+)(out). In terms of biological role, component of the cytochrome c oxidase, the last enzyme in the mitochondrial electron transport chain which drives oxidative phosphorylation. The respiratory chain contains 3 multisubunit complexes succinate dehydrogenase (complex II, CII), ubiquinol-cytochrome c oxidoreductase (cytochrome b-c1 complex, complex III, CIII) and cytochrome c oxidase (complex IV, CIV), that cooperate to transfer electrons derived from NADH and succinate to molecular oxygen, creating an electrochemical gradient over the inner membrane that drives transmembrane transport and the ATP synthase. Cytochrome c oxidase is the component of the respiratory chain that catalyzes the reduction of oxygen to water. Electrons originating from reduced cytochrome c in the intermembrane space (IMS) are transferred via the dinuclear copper A center (CU(A)) of subunit 2 and heme A of subunit 1 to the active site in subunit 1, a binuclear center (BNC) formed by heme A3 and copper B (CU(B)). The BNC reduces molecular oxygen to 2 water molecules using 4 electrons from cytochrome c in the IMS and 4 protons from the mitochondrial matrix. The sequence is that of Cytochrome c oxidase subunit 2 (MT-CO2) from Canis simensis (Ethiopian wolf).